The following is a 62-amino-acid chain: Chromatin protein Cren7 (62 aa).

It belongs to the Cren7 family. Monomer. Methylated at multiple sites, to varying extents.

It is found in the chromosome. It localises to the cytoplasm. A chromatin protein, binds double-stranded DNA without sequence specificity. Constrains negative DNA supercoils. The polypeptide is Chromatin protein Cren7 (Staphylothermus marinus (strain ATCC 43588 / DSM 3639 / JCM 9404 / F1)).